Here is a 163-residue protein sequence, read N- to C-terminus: Flagellar assembly factor FliW (163 aa).

The segment covering 136–156 (PFFETSEKKQSGLQRLERQPE) has biased composition (basic and acidic residues). Positions 136–163 (PFFETSEKKQSGLQRLERQPEKSVPPAG) are disordered.

Belongs to the FliW family. Interacts with translational regulator CsrA and flagellin(s).

The protein resides in the cytoplasm. Its function is as follows. Acts as an anti-CsrA protein, binds CsrA and prevents it from repressing translation of its target genes, one of which is flagellin. Binds to flagellin and participates in the assembly of the flagellum. The polypeptide is Flagellar assembly factor FliW (Geotalea uraniireducens (strain Rf4) (Geobacter uraniireducens)).